The chain runs to 443 residues: Ribulose bisphosphate carboxylase large chain (443 aa).

Substrate is bound by residues Asn-89 and Thr-139. Catalysis depends on Lys-141, which acts as the Proton acceptor. Position 143 (Lys-143) interacts with substrate. Lys-167, Asp-169, and Glu-170 together coordinate Mg(2+). Lys-167 is modified (N6-carboxylysine). The Proton acceptor role is filled by His-260. Arg-261, His-293, and Ser-345 together coordinate substrate.

The protein belongs to the RuBisCO large chain family. Type I subfamily. In terms of assembly, heterohexadecamer of 8 large chains and 8 small chains; disulfide-linked. The disulfide link is formed within the large subunit homodimers. Requires Mg(2+) as cofactor. Post-translationally, the disulfide bond which can form in the large chain dimeric partners within the hexadecamer appears to be associated with oxidative stress and protein turnover.

It is found in the plastid. Its subcellular location is the chloroplast. It catalyses the reaction 2 (2R)-3-phosphoglycerate + 2 H(+) = D-ribulose 1,5-bisphosphate + CO2 + H2O. The catalysed reaction is D-ribulose 1,5-bisphosphate + O2 = 2-phosphoglycolate + (2R)-3-phosphoglycerate + 2 H(+). Its function is as follows. RuBisCO catalyzes two reactions: the carboxylation of D-ribulose 1,5-bisphosphate, the primary event in carbon dioxide fixation, as well as the oxidative fragmentation of the pentose substrate in the photorespiration process. Both reactions occur simultaneously and in competition at the same active site. This chain is Ribulose bisphosphate carboxylase large chain, found in Villarsia calthifolia (Marsh flower).